Here is a 149-residue protein sequence, read N- to C-terminus: Transcriptional repressor NrdR (149 aa).

The segment at 3–34 (CPFCSATDTKVIDSRLVSDGHQVRRRRQCLAC) is a zinc-finger region. The region spanning 49 to 139 (PKVIKSNGNR…VYRSFEDIKE (91 aa)) is the ATP-cone domain.

Belongs to the NrdR family. It depends on Zn(2+) as a cofactor.

Negatively regulates transcription of bacterial ribonucleotide reductase nrd genes and operons by binding to NrdR-boxes. This chain is Transcriptional repressor NrdR, found in Aliivibrio salmonicida (strain LFI1238) (Vibrio salmonicida (strain LFI1238)).